Reading from the N-terminus, the 297-residue chain is 4-hydroxy-tetrahydrodipicolinate synthase (297 aa).

Residue T45 coordinates pyruvate. The active-site Proton donor/acceptor is the Y133. Residue K161 is the Schiff-base intermediate with substrate of the active site. I203 lines the pyruvate pocket.

Belongs to the DapA family. As to quaternary structure, homotetramer; dimer of dimers.

Its subcellular location is the cytoplasm. It catalyses the reaction L-aspartate 4-semialdehyde + pyruvate = (2S,4S)-4-hydroxy-2,3,4,5-tetrahydrodipicolinate + H2O + H(+). The protein operates within amino-acid biosynthesis; L-lysine biosynthesis via DAP pathway; (S)-tetrahydrodipicolinate from L-aspartate: step 3/4. Catalyzes the condensation of (S)-aspartate-beta-semialdehyde [(S)-ASA] and pyruvate to 4-hydroxy-tetrahydrodipicolinate (HTPA). This is 4-hydroxy-tetrahydrodipicolinate synthase from Buchnera aphidicola subsp. Cinara cedri (strain Cc).